The sequence spans 1614 residues: METAPTRAPPPPPPPLLLLVLYCSLVPAAASPLLLFANRRDVRLVDAGGVKLESTIVASGLEDAAAVDFQFSKGAVYWTDVSEEAIKQTYLNQTGAAAQNIVISGLVSPDGLACDWVGKKLYWTDSETNRIEVANLNGTSRKVLFWQDLDQPRAIALDPAHGYMYWTDWGEAPRIERAGMDGSTRKIIVDSDIYWPNGLTIDLEEQKLYWADAKLSFIHRANLDGSFRQKVVEGSLTHPFALTLSGDTLYWTDWQTRSIHACNKWTGEQRKEILSALYSPMDIQVLSQERQPPFHTPCEEDNGGCSHLCLLSPREPFYSCACPTGVQLQDNGKTCKTGAEEVLLLARRTDLRRISLDTPDFTDIVLQVGDIRHAIAIDYDPLEGYVYWTDDEVRAIRRAYLDGSGAQTLVNTEINDPDGIAVDWVARNLYWTDTGTDRIEVTRLNGTSRKILVSEDLDEPRAIVLHPVMGLMYWTDWGENPKIECANLDGRDRHVLVNTSLGWPNGLALDLQEGKLYWGDAKTDKIEVINIDGTKRKTLLEDKLPHIFGFTLLGDFIYWTDWQRRSIERVHKVKASRDVIIDQLPDLMGLKAVNVAKVVGTNPCADGNGGCSHLCFFTPRATKCGCPIGLELLSDMKTCIIPEAFLVFTSRATIHRISLETNNNDVAIPLTGVKEASALDFDVSNNHIYWTDVSLKTISRAFMNGSSVEHVIEFGLDYPEGMAVDWMGKNLYWADTGTNRIEVARLDGQFRQVLVWRDLDNPRSLALDPTKGYIYWTEWGGKPRIVRAFMDGTNCMTLVDKVGRANDLTIDYADQRLYWTDLDTNMIESSNMLGQERMVIADDLPYPFGLTQYSDYIYWTDWNLHSIERADKTSGRNRTLIQGHLDFVMDILVFHSSRQDGLNDCVHSNGQCGQLCLAIPGGHRCGCASHYTLDPSSRNCSPPSTFLLFSQKFAISRMIPDDQLSPDLVLPLHGLRNVKAINYDPLDKFIYWVDGRQNIKRAKDDGTQPSMLTSPSQSLSPDRQPHDLSIDIYSRTLFWTCEATNTINVHRLDGDAMGVVLRGDRDKPRAIAVNAERGYMYFTNMQDHAAKIERASLDGTEREVLFTTGLIRPVALVVDNALGKLFWVDADLKRIESCDLSGANRLTLEDANIVQPVGLTVLGRHLYWIDRQQQMIERVEKTTGDKRTRVQGRVTHLTGIHAVEEVSLEEFSAHPCARDNGGCSHICIAKGDGTPRCSCPVHLVLLQNLLTCGEPPTCSPDQFACTTGEIDCIPGAWRCDGFPECADQSDEEGCPVCSASQFPCARGQCVDLRLRCDGEADCQDRSDEANCDAVCLPNQFRCTSGQCVLIKQQCDSFPDCADGSDELMCEINKPPSDDIPAHSSAIGPVIGIILSLFVMGGVYFVCQRVMCQRYTGASGPFPHEYVGGAPHVPLNFIAPGGSQHGPFPGIPCSKSVMSSMSLVGGRGSVPLYDRNHVTGASSSSSSSTKATLYPPILNPPPSPATDPSLYNVDVFYSSGIPATARPYRPYVIRGMAPPTTPCSTDVCDSDYSTSRWKSSKYYLDLNSDSDPYPPPPTPHSQYLSAEDSCPPSPGTERSYCHLFPPPPSPCTDSS.

The first 30 residues, 1-30 (METAPTRAPPPPPPPLLLLVLYCSLVPAAA), serve as a signal peptide directing secretion. The tract at residues 31 to 287 (SPLLLFANRR…YSPMDIQVLS (257 aa)) is beta-propeller 1. The Extracellular portion of the chain corresponds to 31 to 1383 (SPLLLFANRR…PPSDDIPAHS (1353 aa)). LDL-receptor class B repeat units lie at residues 74–118 (GAVY…DWVG), 119–161 (KKLY…DPAH), 162–205 (GYMY…DLEE), 206–246 (QKLY…TLSG), and 247–289 (DTLY…LSQE). 2 N-linked (GlcNAc...) asparagine glycosylation sites follow: asparagine 92 and asparagine 137. The EGF-like 1 domain maps to 294–336 (FHTPCEEDNGGCSHLCLLSPREPFYSCACPTGVQLQDNGKTCK). Disulfide bonds link cysteine 298–cysteine 309, cysteine 305–cysteine 320, and cysteine 322–cysteine 335. The segment at 340–601 (EEVLLLARRT…AVNVAKVVGT (262 aa)) is beta-propeller 2. LDL-receptor class B repeat units follow at residues 384 to 426 (GYVY…DWVA), 427 to 469 (RNLY…HPVM), 470 to 513 (GLMY…DLQE), 514 to 556 (GKLY…LGDF), and 557 to 599 (IYWT…AKVV). N-linked (GlcNAc...) asparagine glycosylation is found at asparagine 445 and asparagine 498. The 41-residue stretch at 600 to 640 (GTNPCADGNGGCSHLCFFTPRATKCGCPIGLELLSDMKTCI) folds into the EGF-like 2 domain. 3 cysteine pairs are disulfide-bonded: cysteine 604/cysteine 615, cysteine 611/cysteine 624, and cysteine 626/cysteine 639. The segment at 643–902 (EAFLVFTSRA…VFHSSRQDGL (260 aa)) is beta-propeller 3. LDL-receptor class B repeat units follow at residues 686 to 728 (NHIY…DWMG), 729 to 771 (KNLY…DPTK), 772 to 814 (GYIY…DYAD), 815 to 854 (QRLYWTDLDTNMIESSNMLGQERMVIADDLPYPFGLTQYS), and 855 to 897 (DYIY…FHSS). N-linked (GlcNAc...) asparagine glycosylation is present at asparagine 704. Asparagine 877 carries an N-linked (GlcNAc...) asparagine glycan. Residues 901–941 (GLNDCVHSNGQCGQLCLAIPGGHRCGCASHYTLDPSSRNCS) form the EGF-like 3 domain. 3 disulfides stabilise this stretch: cysteine 905-cysteine 916, cysteine 912-cysteine 925, and cysteine 927-cysteine 940. Positions 944–1211 (STFLLFSQKF…AVEEVSLEEF (268 aa)) are beta-propeller 4. LDL-receptor class B repeat units follow at residues 988–1034 (KFIY…DIYS), 1035–1077 (RTLF…NAER), 1078–1122 (GYMY…DNAL), 1123–1164 (GKLF…VLGR), and 1165–1206 (HLYW…VEEV). The interval 1002–1025 (AKDDGTQPSMLTSPSQSLSPDRQP) is disordered. The span at 1007 to 1021 (TQPSMLTSPSQSLSP) shows a compositional bias: polar residues. One can recognise an EGF-like 4 domain in the interval 1212–1253 (SAHPCARDNGGCSHICIAKGDGTPRCSCPVHLVLLQNLLTCG). 12 disulfides stabilise this stretch: cysteine 1216-cysteine 1227, cysteine 1223-cysteine 1237, cysteine 1239-cysteine 1252, cysteine 1258-cysteine 1272, cysteine 1265-cysteine 1285, cysteine 1279-cysteine 1294, cysteine 1297-cysteine 1309, cysteine 1304-cysteine 1322, cysteine 1316-cysteine 1331, cysteine 1335-cysteine 1347, cysteine 1342-cysteine 1360, and cysteine 1354-cysteine 1369. LDL-receptor class A domains lie at 1257 to 1295 (TCSPDQFACTTGEIDCIPGAWRCDGFPECADQSDEEGCP), 1296 to 1332 (VCSASQFPCARGQCVDLRLRCDGEADCQDRSDEANCD), and 1334 to 1370 (VCLPNQFRCTSGQCVLIKQQCDSFPDCADGSDELMCE). The helical transmembrane segment at 1384–1406 (SAIGPVIGIILSLFVMGGVYFVC) threads the bilayer. The Cytoplasmic portion of the chain corresponds to 1407–1614 (QRVMCQRYTG…PPPSPCTDSS (208 aa)). A disordered region spans residues 1474-1498 (RNHVTGASSSSSSSTKATLYPPILN). The PPPSP motif A signature appears at 1499-1505 (PPPSPAT). The short motif at 1537–1544 (PPTTPCST) is the PPPSP motif B element. The tract at residues 1567–1599 (SDSDPYPPPPTPHSQYLSAEDSCPPSPGTERSY) is disordered. The PPPSP motif C motif lies at 1573 to 1580 (PPPPTPHS). Positions 1590–1595 (PPSPGT) match the PPPSP motif D motif. The short motif at 1604–1611 (PPPPSPCT) is the PPPSP motif E element.

Belongs to the LDLR family. In terms of assembly, homodimer; disulfide-linked. Forms phosphorylated oligomer aggregates on Wnt-signaling. Component of a WNT-signaling complex that contains a WNT protein, a FZD protein and LRP5 or LRP6. Interacts with FZD8; the interaction is formed on WNT-binding and signaling. Interacts (via the phosphorylated PPPSP motif domains) with AXIN1; the interaction prevents inhibition of beta-catenin phosphorylation and signaling and is enhanced in the presence of GSK3B and WNT1 or WNT3A. Interacts (via beta-propeller regions 3 and 4) with DKK1; the interaction, enhanced by MESD and/or KREMEN, inhibits beta-catenin signaling by preventing GSK3-mediated phosphorylation of the PPPSP motifs and subsequent, AXIN1 binding. Interacts with CSNK1E. Interacts with SOST; the interaction antagonizes canonical Wnt signaling. Interacts with APCDD1. Interacts with MESD; the interaction prevents the formation of LRP5 aggregates, targets LRP5 to the plasma membrane and, when complexed with KREMEN2, increases DKK1 binding. Interacts with CAPRIN2. In terms of processing, phosphorylation of cytoplasmic PPPSP motifs regulates the signal transduction of the Wnt signaling pathway through acting as a docking site for AXIN1. As to expression, widely expressed, with the highest expression levels in liver, heart, and lung and the lowest levels in brain and spleen.

The protein resides in the membrane. The protein localises to the endoplasmic reticulum. Acts as a coreceptor with members of the frizzled family of seven-transmembrane spanning receptors to transduce signal by Wnt proteins. Activates the canonical Wnt signaling pathway that controls cell fate determination and self-renewal during embryonic development and adult tissue regeneration. In particular, may play an important role in the development of the posterior patterning of the epiblast during gastrulation. During bone development, regulates osteoblast proliferation and differentiation thus determining bone mass. Mechanistically, the formation of the signaling complex between Wnt ligand, frizzled receptor and LRP5 coreceptor promotes the recruitment of AXIN1 to LRP5, stabilizing beta-catenin/CTNNB1 and activating TCF/LEF-mediated transcriptional programs. Acts as a coreceptor for non-Wnt proteins, such as norrin/NDP. Binding of norrin/NDP to frizzled 4/FZD4-LRP5 receptor complex triggers beta-catenin/CTNNB1-dependent signaling known to be required for retinal vascular development. Plays a role in controlling postnatal vascular regression in retina via macrophage-induced endothelial cell apoptosis. The protein is Low-density lipoprotein receptor-related protein 5 of Mus musculus (Mouse).